A 264-amino-acid chain; its full sequence is Thymidylate synthase (264 aa).

Arg21 is a binding site for dUMP. Position 51 (His51) interacts with (6R)-5,10-methylene-5,6,7,8-tetrahydrofolate. DUMP is bound at residue 126–127 (RR). Cys146 acts as the Nucleophile in catalysis. DUMP is bound by residues 166–169 (RSCD), Asn177, and 207–209 (HLY). Asp169 contributes to the (6R)-5,10-methylene-5,6,7,8-tetrahydrofolate binding site. Ala263 provides a ligand contact to (6R)-5,10-methylene-5,6,7,8-tetrahydrofolate.

The protein belongs to the thymidylate synthase family. Bacterial-type ThyA subfamily. Homodimer.

It localises to the cytoplasm. It catalyses the reaction dUMP + (6R)-5,10-methylene-5,6,7,8-tetrahydrofolate = 7,8-dihydrofolate + dTMP. It functions in the pathway pyrimidine metabolism; dTTP biosynthesis. In terms of biological role, catalyzes the reductive methylation of 2'-deoxyuridine-5'-monophosphate (dUMP) to 2'-deoxythymidine-5'-monophosphate (dTMP) while utilizing 5,10-methylenetetrahydrofolate (mTHF) as the methyl donor and reductant in the reaction, yielding dihydrofolate (DHF) as a by-product. This enzymatic reaction provides an intracellular de novo source of dTMP, an essential precursor for DNA biosynthesis. The protein is Thymidylate synthase of Yersinia pestis bv. Antiqua (strain Antiqua).